Reading from the N-terminus, the 419-residue chain is Serine hydroxymethyltransferase (419 aa).

(6S)-5,6,7,8-tetrahydrofolate contacts are provided by residues leucine 121 and 125–127 (GHL). At lysine 229 the chain carries N6-(pyridoxal phosphate)lysine.

The protein belongs to the SHMT family. As to quaternary structure, homodimer. It depends on pyridoxal 5'-phosphate as a cofactor.

The protein resides in the cytoplasm. The enzyme catalyses (6R)-5,10-methylene-5,6,7,8-tetrahydrofolate + glycine + H2O = (6S)-5,6,7,8-tetrahydrofolate + L-serine. The protein operates within one-carbon metabolism; tetrahydrofolate interconversion. It functions in the pathway amino-acid biosynthesis; glycine biosynthesis; glycine from L-serine: step 1/1. Its function is as follows. Catalyzes the reversible interconversion of serine and glycine with tetrahydrofolate (THF) serving as the one-carbon carrier. This reaction serves as the major source of one-carbon groups required for the biosynthesis of purines, thymidylate, methionine, and other important biomolecules. Also exhibits THF-independent aldolase activity toward beta-hydroxyamino acids, producing glycine and aldehydes, via a retro-aldol mechanism. In Histophilus somni (strain 2336) (Haemophilus somnus), this protein is Serine hydroxymethyltransferase.